Consider the following 824-residue polypeptide: Disintegrin and metalloproteinase domain-containing protein 8 (824 aa).

Positions 1–16 (MRGLGLWLLGAMMLPA) are cleaved as a signal peptide. Topologically, residues 17–655 (IAPSRPWALM…EVHAASGSLP (639 aa)) are extracellular. Asn-67 and Asn-91 each carry an N-linked (GlcNAc...) asparagine glycan. The Peptidase M12B domain maps to 200 to 400 (RYVELYVVVD…PQSVCLANAP (201 aa)). 12 disulfides stabilise this stretch: Cys-310–Cys-395, Cys-351–Cys-379, Cys-353–Cys-362, Cys-435–Cys-457, Cys-448–Cys-454, Cys-466–Cys-486, Cys-473–Cys-503, Cys-498–Cys-508, Cys-566–Cys-613, Cys-613–Cys-623, Cys-617–Cys-629, and Cys-631–Cys-640. His-334 is a binding site for Zn(2+). Glu-335 is an active-site residue. 2 residues coordinate Zn(2+): His-338 and His-344. Positions 408-494 (GPVCGNLFVE…ECPEDAFQEN (87 aa)) constitute a Disintegrin domain. Asn-436 carries an N-linked (GlcNAc...) asparagine glycan. Residues 609 to 641 (RSSNCSAQCHNHGVCNHKQECHCHAGWAPPHCA) form the EGF-like domain. Asn-612 carries N-linked (GlcNAc...) asparagine glycosylation. Residues 656-676 (VFVVVVLVLLAVVLVTLAGII) form a helical membrane-spanning segment. Over 677–824 (VYRKARSRIL…KQGAGAPTAP (148 aa)) the chain is Cytoplasmic. Disordered regions lie at residues 710–756 (VPAK…PVTV) and 776–824 (KPTF…PTAP). Residues 747–756 (RPPPAPPVTV) are compositionally biased toward pro residues. Residues 788 to 804 (PGAGAANPGPAEGAVGP) are compositionally biased toward low complexity.

Interacts with FST3. It depends on Zn(2+) as a cofactor. Expressed on neutrophils and monocytes.

It is found in the membrane. In terms of biological role, possible involvement in extravasation of leukocytes. The polypeptide is Disintegrin and metalloproteinase domain-containing protein 8 (ADAM8) (Homo sapiens (Human)).